A 295-amino-acid polypeptide reads, in one-letter code: Aspartate carbamoyltransferase catalytic subunit (295 aa).

Carbamoyl phosphate is bound by residues Arg-49 and Thr-50. An L-aspartate-binding site is contributed by Lys-77. Carbamoyl phosphate-binding residues include Arg-99, His-127, and Gln-130. L-aspartate-binding residues include Arg-161 and Arg-212. Residues Gly-251 and Pro-252 each contribute to the carbamoyl phosphate site.

This sequence belongs to the aspartate/ornithine carbamoyltransferase superfamily. ATCase family. As to quaternary structure, heterododecamer (2C3:3R2) of six catalytic PyrB chains organized as two trimers (C3), and six regulatory PyrI chains organized as three dimers (R2).

It carries out the reaction carbamoyl phosphate + L-aspartate = N-carbamoyl-L-aspartate + phosphate + H(+). Its pathway is pyrimidine metabolism; UMP biosynthesis via de novo pathway; (S)-dihydroorotate from bicarbonate: step 2/3. In terms of biological role, catalyzes the condensation of carbamoyl phosphate and aspartate to form carbamoyl aspartate and inorganic phosphate, the committed step in the de novo pyrimidine nucleotide biosynthesis pathway. This is Aspartate carbamoyltransferase catalytic subunit from Campylobacter jejuni (strain RM1221).